The sequence spans 439 residues: Histidine--tRNA ligase (439 aa).

This sequence belongs to the class-II aminoacyl-tRNA synthetase family. In terms of assembly, homodimer.

The protein resides in the cytoplasm. It carries out the reaction tRNA(His) + L-histidine + ATP = L-histidyl-tRNA(His) + AMP + diphosphate + H(+). The chain is Histidine--tRNA ligase from Leptospira borgpetersenii serovar Hardjo-bovis (strain L550).